Here is a 431-residue protein sequence, read N- to C-terminus: MTNRLETKYENLSSIFRLKGHDYQKQFFHLYAHRLAEMTRLLTPLAQKKWGNKEPIKKLCELRGEQDVHCILIGTIFKHQAHKPSILRDISEENQLAPQPPRQNYSDPEDKIVLEDELQRVRLQGKLNGQLLATGVVCAALGGTDSDGFFNVEDILFYESGPQKPLAPIKRSRLLVLASGLDQLQAHKFVEALNLFQYWLAGSLGNNKEAGSMVRLIVAGNSVRASAMAHVPTLQVARTQANANDTVQAVSQLDQWFASWARSLPVDIMPGPYDPANFMLPQQPFHKCMFPQAAQLATFQAVTNPYSCRLDEALVVGTSGQNVSDLLRSTSLDSALEALRCTLTWGHVAPTAPDTLACYPYIESDPFILRECPHVYYAGNCESFATELHEGSEGKRTRLVCVPSFSKTQSVAVVDLDTLDCRMVNFSVDAE.

It belongs to the DNA polymerase delta/II small subunit family. In terms of assembly, component of both the DNA polymerase delta and DNA polymerase zeta complexes. The DNA polymerase delta complex consisting of three subunits: the catalytic subunit PolD1 and two accessory subunits PolD2/Pol31 and PolD3/Pol32. Within the delta complex, interacts with both PolD1 and PolD3, and is able to interact with PolD1 in the absence of PolD3. Component of the DNA polymerase zeta complex consisting of four subunits: the catalytic subunit PolZ1 and three accessory subunits PolZ2/Rev7, PolD2/Pol31 and PolD3/Pol32. Expressed in ovaries and embryos (at the protein level).

The protein resides in the nucleus. It is found in the nucleoplasm. In terms of biological role, accessory component of both the DNA polymerase delta complex and possibly the DNA polymerase zeta complex. As a component of the delta complex, participates in high fidelity genome replication, including lagging strand synthesis, DNA recombination and repair. Appears to promote the function of the DNA pol-delta complex accessory subunit PolD3 in both embryonic and postembryonic somatic cells. This chain is DNA polymerase delta subunit 2, found in Drosophila melanogaster (Fruit fly).